The primary structure comprises 547 residues: Chaperonin GroEL (547 aa).

ATP is bound by residues 30 to 33, lysine 51, 87 to 91, glycine 415, 479 to 481, and aspartate 495; these read TLGP, DGTTT, and NAA.

The protein belongs to the chaperonin (HSP60) family. In terms of assembly, forms a cylinder of 14 subunits composed of two heptameric rings stacked back-to-back. Interacts with the co-chaperonin GroES.

The protein localises to the cytoplasm. It carries out the reaction ATP + H2O + a folded polypeptide = ADP + phosphate + an unfolded polypeptide.. Together with its co-chaperonin GroES, plays an essential role in assisting protein folding. The GroEL-GroES system forms a nano-cage that allows encapsulation of the non-native substrate proteins and provides a physical environment optimized to promote and accelerate protein folding. This is Chaperonin GroEL from Acinetobacter baumannii (strain ACICU).